Here is a 61-residue protein sequence, read N- to C-terminus: Protein translocase subunit SecE (61 aa).

A helical membrane pass occupies residues 39 to 59 (VGIIIIGLIGFILSIVSQVLF).

This sequence belongs to the SecE/SEC61-gamma family. Component of the Sec protein translocase complex. Heterotrimer consisting of SecY (alpha), SecG (beta) and SecE (gamma) subunits. The heterotrimers can form oligomers, although 1 heterotrimer is thought to be able to translocate proteins. Interacts with the ribosome. May interact with SecDF, and other proteins may be involved.

It localises to the cell membrane. Functionally, essential subunit of the Sec protein translocation channel SecYEG. Clamps together the 2 halves of SecY. May contact the channel plug during translocation. The chain is Protein translocase subunit SecE from Methanosphaera stadtmanae (strain ATCC 43021 / DSM 3091 / JCM 11832 / MCB-3).